The chain runs to 74 residues: Putative membrane protein insertion efficiency factor (74 aa).

Belongs to the UPF0161 family.

The protein resides in the cell inner membrane. Its function is as follows. Could be involved in insertion of integral membrane proteins into the membrane. The protein is Putative membrane protein insertion efficiency factor of Syntrophus aciditrophicus (strain SB).